A 283-amino-acid polypeptide reads, in one-letter code: Bifunctional protein FolD (283 aa).

NADP(+) contacts are provided by residues 165 to 167 (GRS) and Ser190.

The protein belongs to the tetrahydrofolate dehydrogenase/cyclohydrolase family. As to quaternary structure, homodimer.

The enzyme catalyses (6R)-5,10-methylene-5,6,7,8-tetrahydrofolate + NADP(+) = (6R)-5,10-methenyltetrahydrofolate + NADPH. The catalysed reaction is (6R)-5,10-methenyltetrahydrofolate + H2O = (6R)-10-formyltetrahydrofolate + H(+). It functions in the pathway one-carbon metabolism; tetrahydrofolate interconversion. Functionally, catalyzes the oxidation of 5,10-methylenetetrahydrofolate to 5,10-methenyltetrahydrofolate and then the hydrolysis of 5,10-methenyltetrahydrofolate to 10-formyltetrahydrofolate. This is Bifunctional protein FolD from Paracidovorax citrulli (strain AAC00-1) (Acidovorax citrulli).